Consider the following 236-residue polypeptide: Leucyl/phenylalanyl-tRNA--protein transferase (236 aa).

The protein belongs to the L/F-transferase family.

It is found in the cytoplasm. The enzyme catalyses N-terminal L-lysyl-[protein] + L-leucyl-tRNA(Leu) = N-terminal L-leucyl-L-lysyl-[protein] + tRNA(Leu) + H(+). It catalyses the reaction N-terminal L-arginyl-[protein] + L-leucyl-tRNA(Leu) = N-terminal L-leucyl-L-arginyl-[protein] + tRNA(Leu) + H(+). The catalysed reaction is L-phenylalanyl-tRNA(Phe) + an N-terminal L-alpha-aminoacyl-[protein] = an N-terminal L-phenylalanyl-L-alpha-aminoacyl-[protein] + tRNA(Phe). Functions in the N-end rule pathway of protein degradation where it conjugates Leu, Phe and, less efficiently, Met from aminoacyl-tRNAs to the N-termini of proteins containing an N-terminal arginine or lysine. The polypeptide is Leucyl/phenylalanyl-tRNA--protein transferase (Shewanella sp. (strain MR-7)).